A 263-amino-acid chain; its full sequence is Acyl-[acyl-carrier-protein]--UDP-N-acetylglucosamine O-acyltransferase (263 aa).

This sequence belongs to the transferase hexapeptide repeat family. LpxA subfamily. Homotrimer.

It localises to the cytoplasm. The catalysed reaction is a (3R)-hydroxyacyl-[ACP] + UDP-N-acetyl-alpha-D-glucosamine = a UDP-3-O-[(3R)-3-hydroxyacyl]-N-acetyl-alpha-D-glucosamine + holo-[ACP]. The protein operates within glycolipid biosynthesis; lipid IV(A) biosynthesis; lipid IV(A) from (3R)-3-hydroxytetradecanoyl-[acyl-carrier-protein] and UDP-N-acetyl-alpha-D-glucosamine: step 1/6. Functionally, involved in the biosynthesis of lipid A, a phosphorylated glycolipid that anchors the lipopolysaccharide to the outer membrane of the cell. The sequence is that of Acyl-[acyl-carrier-protein]--UDP-N-acetylglucosamine O-acyltransferase from Stenotrophomonas maltophilia (strain K279a).